A 475-amino-acid chain; its full sequence is Putative aldehyde dehydrogenase (475 aa).

Residues 146 to 147 and 223 to 224 each bind NAD(+); these read WN and GS. The Proton acceptor role is filled by glutamate 245. Leucine 246 lines the NAD(+) pocket. Residue cysteine 279 is the Nucleophile of the active site. Glutamate 379 is an NAD(+) binding site.

The protein belongs to the aldehyde dehydrogenase family.

It catalyses the reaction an aldehyde + NAD(+) + H2O = a carboxylate + NADH + 2 H(+). The sequence is that of Putative aldehyde dehydrogenase from Staphylococcus aureus (strain MSSA476).